The sequence spans 179 residues: Probable chemoreceptor glutamine deamidase CheD 2 (179 aa).

It belongs to the CheD family.

It catalyses the reaction L-glutaminyl-[protein] + H2O = L-glutamyl-[protein] + NH4(+). Functionally, probably deamidates glutamine residues to glutamate on methyl-accepting chemotaxis receptors (MCPs), playing an important role in chemotaxis. The sequence is that of Probable chemoreceptor glutamine deamidase CheD 2 from Ruegeria sp. (strain TM1040) (Silicibacter sp.).